Here is an 885-residue protein sequence, read N- to C-terminus: Chitin synthase 3 (885 aa).

Residues 1-59 (MASQYPGHQLDDIPSTNVYRPPPRHEDDEAEHALLHQNSAYQSQYDDPHSRPLTPGQES) form a disordered region. Residues 23 to 34 (PRHEDDEAEHAL) show a composition bias toward basic and acidic residues. A compositionally biased stretch (polar residues) spans 36–45 (HQNSAYQSQY). The next 6 membrane-spanning stretches (helical) occupy residues 565 to 585 (FFLH…WFSL), 620 to 640 (IINT…FILA), 650 to 670 (VAYI…IVLS), 707 to 727 (IVII…FLYM), 735 to 755 (SFAQ…IYAF), and 837 to 857 (LVAT…SDSL).

It belongs to the chitin synthase family. Class III subfamily.

It is found in the cell membrane. It catalyses the reaction [(1-&gt;4)-N-acetyl-beta-D-glucosaminyl](n) + UDP-N-acetyl-alpha-D-glucosamine = [(1-&gt;4)-N-acetyl-beta-D-glucosaminyl](n+1) + UDP + H(+). In terms of biological role, polymerizes chitin, a structural polymer of the cell wall and septum, by transferring the sugar moiety of UDP-GlcNAc to the non-reducing end of the growing chitin polymer. Is not only stable at different pH, but is also able to tolerate a broad temperature range. With CHS2, plays an important role in virulence. This Exophiala dermatitidis (Black yeast-like fungus) protein is Chitin synthase 3.